A 554-amino-acid chain; its full sequence is Dihydroxy-acid dehydratase (554 aa).

Cys51 contacts [2Fe-2S] cluster. Asp83 serves as a coordination point for Mg(2+). Cys124 provides a ligand contact to [2Fe-2S] cluster. 2 residues coordinate Mg(2+): Asp125 and Lys126. At Lys126 the chain carries N6-carboxylysine. Cys193 is a binding site for [2Fe-2S] cluster. A Mg(2+)-binding site is contributed by Glu444. Ser470 functions as the Proton acceptor in the catalytic mechanism.

It belongs to the IlvD/Edd family. In terms of assembly, homodimer. [2Fe-2S] cluster is required as a cofactor. It depends on Mg(2+) as a cofactor.

It catalyses the reaction (2R)-2,3-dihydroxy-3-methylbutanoate = 3-methyl-2-oxobutanoate + H2O. The catalysed reaction is (2R,3R)-2,3-dihydroxy-3-methylpentanoate = (S)-3-methyl-2-oxopentanoate + H2O. The protein operates within amino-acid biosynthesis; L-isoleucine biosynthesis; L-isoleucine from 2-oxobutanoate: step 3/4. Its pathway is amino-acid biosynthesis; L-valine biosynthesis; L-valine from pyruvate: step 3/4. Functions in the biosynthesis of branched-chain amino acids. Catalyzes the dehydration of (2R,3R)-2,3-dihydroxy-3-methylpentanoate (2,3-dihydroxy-3-methylvalerate) into 2-oxo-3-methylpentanoate (2-oxo-3-methylvalerate) and of (2R)-2,3-dihydroxy-3-methylbutanoate (2,3-dihydroxyisovalerate) into 2-oxo-3-methylbutanoate (2-oxoisovalerate), the penultimate precursor to L-isoleucine and L-valine, respectively. In Vesicomyosocius okutanii subsp. Calyptogena okutanii (strain HA), this protein is Dihydroxy-acid dehydratase.